Reading from the N-terminus, the 603-residue chain is MENQAHNTMGTSPCEAELQELMEQIDIMVSNKKMDWERKMRALETRLDLRDQELANAQTCLDQKGQEVGLLRQKLDSLEKCNLAMTQNYEGQLQSLKAQFSKLTNSFEKLRLHQMKQNKVPRKELPHLKEELPFELSNLNQKLEEFRAKSREWDKQEILYQTHLISLDAQQKLLSEKCNQFQKQAQSYQTQLNGKKQCLEDSSSEIPRLICDPDPNCEIGERDEFIIEKLKSAVSEIALSRNKLQDENQKLLQELKMYQRQCQAMEAGLSEVKSELQSRDDLLRIIEMERLQLHRELLKIGECQNAQGNKKRLESSHLPSIKEPERKRKELFSVMQDQPNHEKELNKIRSQLQQEEEYHNSEQERMRNEISDLTEELHQKEITIATVTKKAALLEKQLKMELEIKEKMLAKEQVSDMKYKAVRTENTHLKGMMGDLDPGRYMSMDFTNREHSRHTSINKLEYENERLRNDLAKLRVNGKSTRTNQNTYEETGRYAYQSQIKVEKNEERLSHDCEPNRSTSPLPPLTFQTKEMTSPLVSDDDVFPLSPPDMSFPASLAAQHFLLEEEKRAKELEKLLNTHIDELQRHTEFTLNKYSKLKQNRHI.

Coiled-coil stretches lie at residues 14 to 59, 85 to 197, 227 to 278, 336 to 399, and 454 to 480; these read CEAE…NAQT, MTQN…GKKQ, IEKL…ELQS, QDQP…KQLK, and HTSINKLEYENERLRNDLAKLRVNGKS. The residue at position 546 (serine 546) is a Phosphoserine. Residues 557-600 adopt a coiled-coil conformation; the sequence is AAQHFLLEEEKRAKELEKLLNTHIDELQRHTEFTLNKYSKLKQN.

It belongs to the CEP63 family. As to quaternary structure, interacts with CEP152; the interaction is mutually exclusive with CEP63.

The protein localises to the cytoplasm. Key structural component of the deuterosome, a structure that promotes de novo centriole amplification in multiciliated cells. Deuterosome-mediated centriole amplification occurs in terminally differentiated multiciliated cells and can generate more than 100 centrioles. Probably sufficient for the specification and formation of the deuterosome inner core. Interacts with CEP152 and recruits PLK4 to activate centriole biogenesis. In Macaca fascicularis (Crab-eating macaque), this protein is Deuterosome assembly protein 1.